The chain runs to 139 residues: ATP synthase epsilon chain (139 aa).

Belongs to the ATPase epsilon chain family. As to quaternary structure, F-type ATPases have 2 components, CF(1) - the catalytic core - and CF(0) - the membrane proton channel. CF(1) has five subunits: alpha(3), beta(3), gamma(1), delta(1), epsilon(1). CF(0) has three main subunits: a, b and c.

It localises to the cell inner membrane. Its function is as follows. Produces ATP from ADP in the presence of a proton gradient across the membrane. The sequence is that of ATP synthase epsilon chain from Actinobacillus pleuropneumoniae serotype 7 (strain AP76).